Here is a 672-residue protein sequence, read N- to C-terminus: Hydrogenase-4 component B (672 aa).

Over 1–5 the chain is Periplasmic; the sequence is MDALQ. Residues 6 to 26 traverse the membrane as a helical segment; it reads LLTWSLILYLFASLASLFLLG. The Cytoplasmic portion of the chain corresponds to 27–30; the sequence is LDRL. The chain crosses the membrane as a helical span at residues 31-51; that stretch reads AIKLSGITSLVGGVIGIISGI. The Periplasmic segment spans residues 52 to 79; sequence TQLHAGVTLVARFAPPFEFADLTLRMDS. The chain crosses the membrane as a helical span at residues 80–100; sequence LSAFMVLVISLLVVVCSLYSL. The Cytoplasmic portion of the chain corresponds to 101–119; the sequence is TYMREYEGKGAAAMGFFMN. Residues 120-140 form a helical membrane-spanning segment; that stretch reads IFIASMVALLVMDNAFWFIVL. Residues 141–164 are Periplasmic-facing; the sequence is FEMMSLSSWFLVIARQDKTSINAG. A helical membrane pass occupies residues 165-185; the sequence is MLYFFIAHAGSVLIMIAFLLM. The Cytoplasmic segment spans residues 186 to 199; the sequence is GRESGSLDFASFRT. Residues 200–220 traverse the membrane as a helical segment; it reads LSLSPGLASAVFLLAFFGFGA. Residues 221-242 are Periplasmic-facing; the sequence is KAGMMPLHSWLPRAHPAAPSHA. Residues 243-263 traverse the membrane as a helical segment; sequence SALMSGVMVKIGIFGILKVAM. At 264–272 the chain is on the cytoplasmic side; that stretch reads DLLAQTGLP. A helical transmembrane segment spans residues 273–293; it reads LWWGILVMAIGAISALLGVLY. Residues 294 to 311 lie on the Periplasmic side of the membrane; the sequence is ALAEQDIKRLLAWSTVEN. The helical transmembrane segment at 312–332 threads the bilayer; sequence VGIILLAVGVAMVGLSLHDPL. Residues 333 to 342 are Cytoplasmic-facing; it reads LTVVGLLGAL. The helical transmembrane segment at 343–363 threads the bilayer; the sequence is FHLLNHALFKGLLFLGAGAII. Residues 364–384 are Periplasmic-facing; it reads SRLHTHDMEKMGALAKRMPWT. Residues 385–405 form a helical membrane-spanning segment; that stretch reads AAACLIGCLAISAIPPLNGFI. The Cytoplasmic segment spans residues 406-427; it reads SEWYTWQSLFSLSRVEAVALQL. The helical transmembrane segment at 428 to 448 threads the bilayer; the sequence is AGPIAMVMLAVTGGLAVMCFV. The Periplasmic segment spans residues 449 to 474; sequence KMYGITFCGAPRSTHAEEAQEVPNTM. The chain crosses the membrane as a helical span at residues 475–495; sequence IVAMLLLAALCVLIALSASWL. Residues 496-504 lie on the Cytoplasmic side of the membrane; it reads APKIMHIAH. The chain crosses the membrane as a helical span at residues 505 to 525; sequence AFTNTPPATVASGIALVPGTF. Over 526–531 the chain is Periplasmic; sequence HTQVTP. A helical membrane pass occupies residues 532-552; that stretch reads SLLLLLLLAMPLLPGLYWLWC. Residues 553–651 lie on the Cytoplasmic side of the membrane; it reads RSRRAAFRRT…KEIQHLQSGD (99 aa). A helical transmembrane segment spans residues 652-672; sequence FRLYCLYVVAALVVLLIAIAV.

This sequence belongs to the complex I subunit 5 family.

The protein localises to the cell inner membrane. Possible component of hydrogenase 4. The protein is Hydrogenase-4 component B of Escherichia coli (strain K12).